The primary structure comprises 3032 residues: DmX-like protein 2 (3032 aa).

WD repeat units follow at residues 108 to 145 (FLSS…ILEE), 167 to 207 (KTSV…KSSI), and 230 to 278 (AHPR…EDCL). Serine 326 carries the phosphoserine modification. Residues 418-486 (QLDHESDDAD…HPRPSISMPL (69 aa)) form a disordered region. Positions 422 to 434 (ESDDADREDEERS) are enriched in acidic residues. Residues 435-474 (QDERERGLRMKLDHELSLDRESEAGTGSSEHEDGEREGSP) show a composition bias toward basic and acidic residues. Phosphoserine is present on serine 473. Residues 492 to 532 (DRKIETLLTEWNKNPDMLFTIHPVDGTFLVWHVKYLDEYNP) form a WD 4 repeat. Residues 577-598 (PSQQEMMSVDSPHGSQLHSPSH) form a disordered region. Residue serine 587 is modified to Phosphoserine. Over residues 589–598 (HGSQLHSPSH) the composition is skewed to polar residues. WD repeat units lie at residues 594–633 (HSPS…KSAF), 750–802 (LHTS…RKLL), and 879–921 (QPSQ…VQAC). Residues 937–958 (VPGQKNLDSSPETSSSMSSVPH) form a disordered region. Residues serine 945 and serine 946 each carry the phosphoserine modification. Residues 945-958 (SSPETSSSMSSVPH) are compositionally biased toward low complexity. The WD 8 repeat unit spans residues 1001 to 1038 (LSSSSIYPVCLAPYLVVTTCSDNKVRFWKCCMETNSLG). 3 positions are modified to phosphoserine: serine 1141, serine 1144, and serine 1152. WD repeat units lie at residues 1164–1205 (PNIK…VSDQ) and 1245–1285 (GTPS…GNVD). Residues serine 1288 and serine 1399 each carry the phosphoserine modification. Phosphothreonine is present on threonine 1416. The interval 1443–1464 (RISEDSTKKPQSYEDHIESQSE) is disordered. The segment covering 1444-1461 (ISEDSTKKPQSYEDHIES) has biased composition (basic and acidic residues). Phosphoserine is present on serine 1856. Positions 1922-1953 (QLDSVSGRMENGPSESKPVSRSDGGSGADWSA) are disordered. A Phosphothreonine modification is found at threonine 2017. Residues 2117-2146 (GSYERHQIERRRLQAKREHAERRKLWLQKN) are a coiled coil. Phosphoserine is present on residues serine 2394 and serine 2636. The segment covering 2722–2732 (QPGAASHSSSQ) has biased composition (low complexity). The tract at residues 2722–2744 (QPGAASHSSSQPHPPPSLPWLGS) is disordered. WD repeat units lie at residues 2757–2796 (RNLH…QLVC), 2800–2839 (AGNA…SNPK), 2846–2888 (CHSK…GNSL), 2894–2933 (CHDH…LIHT), 2936–2975 (AHDS…LIHS), and 2988–3026 (NIGA…NIPN).

As to quaternary structure, interacts with MADD and RAB3GAP. As to expression, expressed in the brain and pituitary gland. Detected in the hippocampus, dentate gyrus, hypothalamus, pyriform cortex and the granular and molecular layers of the cerebellum of adult animals. In the hypothalamus, expression is observed in the arcuate nucleus, the ME, the organum vasculosum of the lamina terminalis, and the subfornical organ, the subcommissural organ, and the suprachiasmatic nucleus. Both tanycytes and hypothalamic neurosecretory neurons express the protein. Expressed in the inner and outer hair cells as well as in the spiral ganglion neurons. Expressed in insulin-secreting cells of the islets of Langerhans in the pancreas.

It localises to the cytoplasmic vesicle. The protein resides in the secretory vesicle. It is found in the synaptic vesicle membrane. The protein localises to the neuronal dense core vesicle. May serve as a scaffold protein for MADD and RAB3GA on synaptic vesicles of neuronal and endocrine homeostatic processes. Plays a role in the brain as a key controller of neuronal and endocrine homeostatic processes. This Mus musculus (Mouse) protein is DmX-like protein 2 (Dmxl2).